Here is a 442-residue protein sequence, read N- to C-terminus: UDP-glucosyltransferase 29 (442 aa).

The active-site Proton acceptor is histidine 20. Residue histidine 20 coordinates an anthocyanidin. Aspartate 116 (charge relay) is an active-site residue. The UDP-alpha-D-glucose site is built by threonine 138, alanine 318, glutamine 320, histidine 335, tryptophan 338, serine 340, glutamate 343, aspartate 359, and glutamine 360.

Belongs to the UDP-glycosyltransferase family. Expressed at higher levels in roots than in leaves.

The catalysed reaction is (20S)-ginsenoside F2 + UDP-alpha-D-glucose = (20S)-ginsenoside Rd + UDP + H(+). The enzyme catalyses (20S)-ginsenoside Rh2 + UDP-alpha-D-glucose = (20S)-ginsenoside Rg3 + UDP + H(+). Its pathway is secondary metabolite biosynthesis; terpenoid biosynthesis. Its function is as follows. Component of the dammarane-type triterpene saponins (e.g. PPD-type ginsenosides or panaxosides) biosynthetic pathway. Glycosyltransferase that catalyzes the conversion of ginsenoside Rh2 to ginsenoside Rg3. Triggers the biosynthesis of ginsenoside Rd from ginsenoside F2. The sequence is that of UDP-glucosyltransferase 29 from Panax ginseng (Korean ginseng).